Here is a 493-residue protein sequence, read N- to C-terminus: Cyclin-dependent kinase-like 2 (493 aa).

The Protein kinase domain occupies 4-287; it reads YENLGLVGEG…CAELLHHDFF (284 aa). Residues 10 to 18 and lysine 33 each bind ATP; that span reads VGEGSYGMV. A [NKR]KIAxRE motif is present at residues 45 to 51; it reads KKIAMRE. The active-site Proton acceptor is aspartate 126. The interval 363–384 is disordered; sequence GEKAEKGNRASNASCLHDSRTS.

Belongs to the protein kinase superfamily. CMGC Ser/Thr protein kinase family. CDC2/CDKX subfamily. Expressed in testis and kidney, and at lower level in brain and lung.

The protein resides in the cytoplasm. Its subcellular location is the nucleus. It carries out the reaction L-seryl-[protein] + ATP = O-phospho-L-seryl-[protein] + ADP + H(+). The enzyme catalyses L-threonyl-[protein] + ATP = O-phospho-L-threonyl-[protein] + ADP + H(+). The chain is Cyclin-dependent kinase-like 2 from Homo sapiens (Human).